The sequence spans 343 residues: Probable 3',5'-cyclic-nucleotide phosphodiesterase (343 aa).

Positions 1–36 (MKYLSIKSASDKIKSGLLKTGVILSFSLFSSLSTAA) are cleaved as a signal peptide.

This sequence belongs to the cyclic nucleotide phosphodiesterase class-II family.

The protein resides in the periplasm. The catalysed reaction is a nucleoside 3',5'-cyclic phosphate + H2O = a nucleoside 5'-phosphate + H(+). The protein is Probable 3',5'-cyclic-nucleotide phosphodiesterase (cpdP) of Yersinia pestis.